Here is a 277-residue protein sequence, read N- to C-terminus: Phosphate import ATP-binding protein PstB (277 aa).

Positions 31-272 constitute an ABC transporter domain; sequence IEVPGLSLFY…PAKKQTEDYI (242 aa). 63-70 is a binding site for ATP; the sequence is GPSGCGKS.

It belongs to the ABC transporter superfamily. Phosphate importer (TC 3.A.1.7) family. The complex is composed of two ATP-binding proteins (PstB), two transmembrane proteins (PstC and PstA) and a solute-binding protein (PstS).

Its subcellular location is the cell inner membrane. The enzyme catalyses phosphate(out) + ATP + H2O = ADP + 2 phosphate(in) + H(+). Part of the ABC transporter complex PstSACB involved in phosphate import. Responsible for energy coupling to the transport system. The protein is Phosphate import ATP-binding protein PstB of Pseudomonas putida (Arthrobacter siderocapsulatus).